The primary structure comprises 496 residues: Zinc finger protein PLAGL2 (496 aa).

6 C2H2-type zinc fingers span residues 68-92, 98-120, 127-149, 156-178, 191-213, and 219-242; these read YSCPQLHCGKAFASKYKLYRHMATH, HQCMYCDKMFHRKDHLRNHLQTH, LHCSECGKNYNTKLGYRRHLAMH, LSCKVCLQTFESTQALLEHLKAH, HPCDHCDRRFYTRKDVRRHLVVH, and FLCQYCAQRFGRKDHLTRHVKKSH.

Belongs to the krueppel C2H2-type zinc-finger protein family.

The protein localises to the nucleus. Shows weak transcriptional activatory activity. This chain is Zinc finger protein PLAGL2 (PLAGL2), found in Homo sapiens (Human).